The following is a 462-amino-acid chain: Argininosuccinate lyase (462 aa).

It belongs to the lyase 1 family. Argininosuccinate lyase subfamily.

The protein resides in the cytoplasm. The catalysed reaction is 2-(N(omega)-L-arginino)succinate = fumarate + L-arginine. It participates in amino-acid biosynthesis; L-arginine biosynthesis; L-arginine from L-ornithine and carbamoyl phosphate: step 3/3. This Bacillus mycoides (strain KBAB4) (Bacillus weihenstephanensis) protein is Argininosuccinate lyase.